The following is a 201-amino-acid chain: Superoxide dismutase [Mn] (201 aa).

4 residues coordinate Mn(2+): His27, His81, Asp163, and His167.

Belongs to the iron/manganese superoxide dismutase family. As to quaternary structure, homodimer. The cofactor is Mn(2+).

It is found in the secreted. The catalysed reaction is 2 superoxide + 2 H(+) = H2O2 + O2. Its function is as follows. Destroys superoxide anion radicals which are normally produced within the cells and which are toxic to biological systems. The polypeptide is Superoxide dismutase [Mn] (sodA) (Streptococcus pyogenes).